The following is a 757-amino-acid chain: UDP-N-acetylmuramoyl-L-alanyl-D-glutamate--2,6-diaminopimelate ligase MurE homolog, chloroplastic (757 aa).

Residues 1–11 (MATAPLAFHLP) are compositionally biased toward low complexity. Residues 1–53 (MATAPLAFHLPFPFPSASRPPPRLLPPSRRPPAARLAATRRFRPPTADDEPPE) constitute a chloroplast transit peptide. Disordered stretches follow at residues 1 to 112 (MATA…DEFF), 126 to 152 (FTRR…ADEL), and 172 to 195 (VSLA…GDDG). Residues 12–30 (FPFPSASRPPPRLLPPSRR) show a composition bias toward pro residues. Composition is skewed to acidic residues over residues 47–56 (ADDEPPEAAE) and 142–152 (PEEEDGLADEL).

The protein belongs to the MurCDEF family. MurE subfamily. Component of the plastid-encoded plastid RNA polymerase (PEP) complex.

The protein resides in the plastid. It localises to the chloroplast. Its function is as follows. Required for the activity of the plastid-encoded RNA polymerase (PEP) and full expression of genes transcribed by PEP. The sequence is that of UDP-N-acetylmuramoyl-L-alanyl-D-glutamate--2,6-diaminopimelate ligase MurE homolog, chloroplastic from Oryza sativa subsp. japonica (Rice).